A 544-amino-acid polypeptide reads, in one-letter code: Methionine--tRNA ligase (544 aa).

Positions 10–20 (PYANGSLHLGH) match the 'HIGH' region motif. Zn(2+) contacts are provided by Cys-141, Cys-144, Cys-153, and Cys-156. A 'KMSKS' region motif is present at residues 329-333 (KLSTS). Thr-332 is an ATP binding site.

It belongs to the class-I aminoacyl-tRNA synthetase family. MetG type 1 subfamily. As to quaternary structure, monomer. It depends on Zn(2+) as a cofactor.

The protein localises to the cytoplasm. It catalyses the reaction tRNA(Met) + L-methionine + ATP = L-methionyl-tRNA(Met) + AMP + diphosphate. In terms of biological role, is required not only for elongation of protein synthesis but also for the initiation of all mRNA translation through initiator tRNA(fMet) aminoacylation. The chain is Methionine--tRNA ligase from Bacillus cereus (strain G9842).